The following is a 129-amino-acid chain: Arsenate-mycothiol transferase ArsC2 (129 aa).

It belongs to the low molecular weight phosphotyrosine protein phosphatase family.

The protein resides in the cytoplasm. It carries out the reaction mycothiol + arsenate = arseno-mycothiol + H2O. Its function is as follows. Involved in defense against toxic arsenate. Involved in the mycothiol/myoredoxin redox pathway which uses a mycothioltransferase mechanism; facilitates adduct formation between arsenate and mycothiol. This is Arsenate-mycothiol transferase ArsC2 (arsC2) from Corynebacterium glutamicum (strain ATCC 13032 / K051).